The following is a 493-amino-acid chain: MTIQPSDKPLLEWAGDSLAIGLFEDAVELTGELATLDQKFSGVLKELIAEEEFKGKANSTIFTRVNPGRPVRKLILVGLGKPDALKLDTLRRAAAAVARVAKKQKSKILGFSFPLWNNDPAASAQAIAEGVELALYQDIRFKSEPEDKGSQIETVDLLGFSGQEAAITLANQIVSGVNLARELVAAPANAVTPITLAETAQAIAKDYGLQVEILEKEDCEKLGMGAFLGVAQASELPPKFIHLTYKPEGTPKKKLAIIGKGVTFDSGGLNIKGAGSGIETMKMDMGGAAATLGAAKAIAQIKPDVEVHFISAVAENMISGRAMHPGDILTASNGKTIEVNNTDAEGRLTLADALVYAEKLGLDAIVDLATLTGANVIALGDDIAGLYTPDDDVASQIEKAAQTSGEKIWRMPMEEKYFEGLKSGIADMKNTGPRPGGAITAALFLKQFVKETPWAHLDIAGPVWTDKENGYNGAGATGYGVRLLVNWVLGIGE.

Residues K260 and D265 each contribute to the Mn(2+) site. The active site involves K272. Residues D284, D343, and E345 each contribute to the Mn(2+) site. R347 is an active-site residue.

Belongs to the peptidase M17 family. Mn(2+) is required as a cofactor.

Its subcellular location is the cytoplasm. It carries out the reaction Release of an N-terminal amino acid, Xaa-|-Yaa-, in which Xaa is preferably Leu, but may be other amino acids including Pro although not Arg or Lys, and Yaa may be Pro. Amino acid amides and methyl esters are also readily hydrolyzed, but rates on arylamides are exceedingly low.. The enzyme catalyses Release of an N-terminal amino acid, preferentially leucine, but not glutamic or aspartic acids.. Presumably involved in the processing and regular turnover of intracellular proteins. Catalyzes the removal of unsubstituted N-terminal amino acids from various peptides. This is Probable cytosol aminopeptidase from Nostoc punctiforme (strain ATCC 29133 / PCC 73102).